A 158-amino-acid polypeptide reads, in one-letter code: MYMPLALVYASFLTLPASTSPATKGNVIQIQVHNIVNLAQTTVAHIRKLRMQLLMAPPIEITTPPIKGLASFSHYLKHLDNELQSPDTDLLSQIQADVSSLDGKVQSLGLMMNCPFQPRPTAEVSRFLFPDIHHYWTIAKVENYLESLHLNRDKLKVC.

An N-terminal signal peptide occupies residues Met1–Thr19. An intrachain disulfide couples Cys114 to Cys158.

It belongs to the leptin family. In terms of tissue distribution, highly expressed in the brain and eye. Expressed at low levels in muscle and skin.

Its subcellular location is the secreted. Its function is as follows. May function as part of a signaling pathway that acts to regulate the size of the body fat depot. This is Leptin-B from Oryzias latipes (Japanese rice fish).